A 379-amino-acid polypeptide reads, in one-letter code: Chaperone protein DnaJ (379 aa).

In terms of domain architecture, J spans 5-69; it reads EYYERLGVDK…QKRAAYDQYG (65 aa). Residues 141 to 223 form a CR-type zinc finger; sequence GVEKQVKYNR…CHGSGHEKVA (83 aa). Residues cysteine 154, cysteine 157, cysteine 171, cysteine 174, cysteine 197, cysteine 200, cysteine 211, and cysteine 214 each contribute to the Zn(2+) site. CXXCXGXG motif repeat units follow at residues 154 to 161, 171 to 178, 197 to 204, and 211 to 218; these read CHTCDGSG, CHKCGGRG, CDVCHGTG, and CTTCHGSG.

Belongs to the DnaJ family. Homodimer. It depends on Zn(2+) as a cofactor.

The protein resides in the cytoplasm. Functionally, participates actively in the response to hyperosmotic and heat shock by preventing the aggregation of stress-denatured proteins and by disaggregating proteins, also in an autonomous, DnaK-independent fashion. Unfolded proteins bind initially to DnaJ; upon interaction with the DnaJ-bound protein, DnaK hydrolyzes its bound ATP, resulting in the formation of a stable complex. GrpE releases ADP from DnaK; ATP binding to DnaK triggers the release of the substrate protein, thus completing the reaction cycle. Several rounds of ATP-dependent interactions between DnaJ, DnaK and GrpE are required for fully efficient folding. Also involved, together with DnaK and GrpE, in the DNA replication of plasmids through activation of initiation proteins. The sequence is that of Chaperone protein DnaJ from Lactococcus lactis subsp. cremoris (strain SK11).